Consider the following 428-residue polypeptide: 3-phosphoshikimate 1-carboxyvinyltransferase (428 aa).

The 3-phosphoshikimate site is built by Lys-23, Ser-24, and Arg-28. Residue Lys-23 coordinates phosphoenolpyruvate. Positions 97 and 125 each coordinate phosphoenolpyruvate. 3-phosphoshikimate contacts are provided by Ser-170, Ser-171, Gln-172, Ser-198, Asp-314, Asn-337, and Lys-341. A phosphoenolpyruvate-binding site is contributed by Gln-172. The active-site Proton acceptor is Asp-314. 3 residues coordinate phosphoenolpyruvate: Arg-345, Arg-387, and Lys-412.

The protein belongs to the EPSP synthase family. Monomer.

It localises to the cytoplasm. It carries out the reaction 3-phosphoshikimate + phosphoenolpyruvate = 5-O-(1-carboxyvinyl)-3-phosphoshikimate + phosphate. It functions in the pathway metabolic intermediate biosynthesis; chorismate biosynthesis; chorismate from D-erythrose 4-phosphate and phosphoenolpyruvate: step 6/7. In terms of biological role, catalyzes the transfer of the enolpyruvyl moiety of phosphoenolpyruvate (PEP) to the 5-hydroxyl of shikimate-3-phosphate (S3P) to produce enolpyruvyl shikimate-3-phosphate and inorganic phosphate. The sequence is that of 3-phosphoshikimate 1-carboxyvinyltransferase from Erwinia tasmaniensis (strain DSM 17950 / CFBP 7177 / CIP 109463 / NCPPB 4357 / Et1/99).